Reading from the N-terminus, the 510-residue chain is GMP synthase [glutamine-hydrolyzing] (510 aa).

One can recognise a Glutamine amidotransferase type-1 domain in the interval 3–194 (QILILDFGSQ…ARVICGYKEK (192 aa)). C80 functions as the Nucleophile in the catalytic mechanism. Catalysis depends on residues H168 and E170. One can recognise a GMPS ATP-PPase domain in the interval 195–385 (WTPASIMTAS…LGLGSEIVDI (191 aa)). Residue 222–228 (SGGVDSS) participates in ATP binding.

In terms of assembly, homodimer.

The catalysed reaction is XMP + L-glutamine + ATP + H2O = GMP + L-glutamate + AMP + diphosphate + 2 H(+). Its pathway is purine metabolism; GMP biosynthesis; GMP from XMP (L-Gln route): step 1/1. In terms of biological role, catalyzes the synthesis of GMP from XMP. The sequence is that of GMP synthase [glutamine-hydrolyzing] from Elusimicrobium minutum (strain Pei191).